An 88-amino-acid polypeptide reads, in one-letter code: UPF0335 protein M446_5200 (88 aa).

This sequence belongs to the UPF0335 family.

The polypeptide is UPF0335 protein M446_5200 (Methylobacterium sp. (strain 4-46)).